Reading from the N-terminus, the 405-residue chain is Tyrosine--tRNA ligase (405 aa).

Tyr35 serves as a coordination point for L-tyrosine. Positions 40–49 (ATSSSLHIGH) match the 'HIGH' region motif. L-tyrosine is bound by residues Tyr166 and Gln170. Positions 226–230 (KMGKS) match the 'KMSKS' region motif. Residue Lys229 coordinates ATP. An S4 RNA-binding domain is found at 340 to 405 (ILLVDLMLDS…GKKKFLRIVI (66 aa)).

This sequence belongs to the class-I aminoacyl-tRNA synthetase family. TyrS type 1 subfamily. As to quaternary structure, homodimer.

The protein resides in the cytoplasm. It carries out the reaction tRNA(Tyr) + L-tyrosine + ATP = L-tyrosyl-tRNA(Tyr) + AMP + diphosphate + H(+). Catalyzes the attachment of tyrosine to tRNA(Tyr) in a two-step reaction: tyrosine is first activated by ATP to form Tyr-AMP and then transferred to the acceptor end of tRNA(Tyr). This Borreliella burgdorferi (strain ATCC 35210 / DSM 4680 / CIP 102532 / B31) (Borrelia burgdorferi) protein is Tyrosine--tRNA ligase.